A 143-amino-acid chain; its full sequence is Deoxyuridine 5'-triphosphate nucleotidohydrolase (143 aa).

Substrate is bound by residues 62–64 (RSG), asparagine 75, 79–81 (TID), and lysine 89.

It belongs to the dUTPase family. It depends on Mg(2+) as a cofactor.

The catalysed reaction is dUTP + H2O = dUMP + diphosphate + H(+). It participates in pyrimidine metabolism; dUMP biosynthesis; dUMP from dCTP (dUTP route): step 2/2. Functionally, this enzyme is involved in nucleotide metabolism: it produces dUMP, the immediate precursor of thymidine nucleotides and it decreases the intracellular concentration of dUTP so that uracil cannot be incorporated into DNA. The protein is Deoxyuridine 5'-triphosphate nucleotidohydrolase of Clostridium kluyveri (strain ATCC 8527 / DSM 555 / NBRC 12016 / NCIMB 10680 / K1).